The sequence spans 389 residues: Teichoic acid ribitol-phosphate primase (389 aa).

Belongs to the CDP-glycerol glycerophosphotransferase family.

The protein resides in the cell membrane. The enzyme catalyses 4-O-[(2R)-glycerylphospho]-N-acetyl-beta-D-mannosaminyl-(1-&gt;4)-N-acetyl-alpha-D-glucosaminyl di-trans,octa-cis-undecaprenyl diphosphate + CDP-L-ribitol = 4-O-[1-D-ribitylphospho-(2R)-1-glycerylphospho]-N-acetyl-beta-D-mannosaminyl-(1-&gt;4)-N-acetyl-alpha-D-glucosaminyl di-trans,octa-cis-undecaprenyl diphosphate + CMP + H(+). It functions in the pathway cell wall biogenesis; poly(ribitol phosphate) teichoic acid biosynthesis. In terms of biological role, catalyzes the addition of a single ribitol phosphate unit onto the glycerol phosphate of the linkage unit, as a primer for polymerisation by TarL. This Bacillus spizizenii (strain ATCC 23059 / NRRL B-14472 / W23) (Bacillus subtilis subsp. spizizenii) protein is Teichoic acid ribitol-phosphate primase (tarK).